The following is a 233-amino-acid chain: MPDPRPLTPDQTHGRGHAEAAVDWEASRLYRLAQSERRAWTVAWAALAVTALSLIAIATMLPLKTTIPYLIEVEKSSGAASVVTQFEPRDFTPDTLMNQYWLTRYVAARERYDWHTIQHDYDYVRLLSAPAVRHDYETSYEAPDAPDRKYGAGTTLAVKILSAIDHGKGVGTVRFVRTRRDADGQGAAESSIWVATVAFAYDRPRALTQAQRWLNPLGFAVTSYRVDAEAGQP.

The chain crosses the membrane as a helical span at residues 42–62; that stretch reads VAWAALAVTALSLIAIATMLP.

It belongs to the virB8 family.

It is found in the cell inner membrane. The chain is Type IV secretion system protein PtlE homolog (ptlE) from Bordetella bronchiseptica (strain ATCC BAA-588 / NCTC 13252 / RB50) (Alcaligenes bronchisepticus).